A 407-amino-acid polypeptide reads, in one-letter code: Imidazolonepropionase (407 aa).

Fe(3+)-binding residues include His74 and His76. 2 residues coordinate Zn(2+): His74 and His76. Residues Arg83, Tyr146, and His179 each contribute to the 4-imidazolone-5-propanoate site. Position 146 (Tyr146) interacts with N-formimidoyl-L-glutamate. His244 serves as a coordination point for Fe(3+). A Zn(2+)-binding site is contributed by His244. Position 247 (Gln247) interacts with 4-imidazolone-5-propanoate. Residue Asp319 participates in Fe(3+) binding. Asp319 contributes to the Zn(2+) binding site. Asn321 and Gly323 together coordinate N-formimidoyl-L-glutamate. Thr324 is a 4-imidazolone-5-propanoate binding site.

Belongs to the metallo-dependent hydrolases superfamily. HutI family. Zn(2+) serves as cofactor. The cofactor is Fe(3+).

It is found in the cytoplasm. The enzyme catalyses 4-imidazolone-5-propanoate + H2O = N-formimidoyl-L-glutamate. The protein operates within amino-acid degradation; L-histidine degradation into L-glutamate; N-formimidoyl-L-glutamate from L-histidine: step 3/3. Functionally, catalyzes the hydrolytic cleavage of the carbon-nitrogen bond in imidazolone-5-propanoate to yield N-formimidoyl-L-glutamate. It is the third step in the universal histidine degradation pathway. The chain is Imidazolonepropionase from Salmonella typhi.